A 182-amino-acid chain; its full sequence is Ribosome-recycling factor (182 aa).

It belongs to the RRF family.

It is found in the cytoplasm. Responsible for the release of ribosomes from messenger RNA at the termination of protein biosynthesis. May increase the efficiency of translation by recycling ribosomes from one round of translation to another. This chain is Ribosome-recycling factor, found in Prochlorococcus marinus (strain AS9601).